A 427-amino-acid chain; its full sequence is Pseudouridylate synthase 1 homolog (427 aa).

The tract at residues glycine 20–lysine 83 is disordered. A compositionally biased stretch (basic and acidic residues) spans glutamine 44–glutamate 79. The active-site Nucleophile is aspartate 146. A disordered region spans residues glycine 407–aspartate 427. Phosphoserine occurs at positions 415 and 420. Residue threonine 426 is modified to Phosphothreonine.

The protein belongs to the tRNA pseudouridine synthase TruA family. As to quaternary structure, monomer. Forms a complex with RARG and the SRA1 RNA in the nucleus. As to expression, widely expressed. High levels of expression found in brain and skeletal muscle.

The protein resides in the mitochondrion. It localises to the nucleus. The protein localises to the cytoplasm. It carries out the reaction a uridine in tRNA = a pseudouridine in tRNA. It catalyses the reaction uridine(38/39/40) in tRNA = pseudouridine(38/39/40) in tRNA. The catalysed reaction is a uridine in mRNA = a pseudouridine in mRNA. In terms of biological role, pseudouridylate synthase that catalyzes pseudouridylation of tRNAs and mRNAs. Acts on positions 27/28 in the anticodon stem and also positions 34 and 36 in the anticodon of an intron containing tRNA. Also catalyzes pseudouridylation of mRNAs: mediates pseudouridylation of mRNAs with the consensus sequence 5'-UGUAG-3'. Acts as a regulator of pre-mRNA splicing by mediating pseudouridylation of pre-mRNAs at locations associated with alternatively spliced regions. Pseudouridylation of pre-mRNAs near splice sites directly regulates mRNA splicing and mRNA 3'-end processing. Involved in regulation of nuclear receptor activity through pseudouridylation of SRA1 mRNA. The chain is Pseudouridylate synthase 1 homolog from Homo sapiens (Human).